The primary structure comprises 313 residues: Spermatid maturation protein 1 (313 aa).

Residues 29-49 (ILLLLGLIICINIGINMVTLL) traverse the membrane as a helical segment. 4 disordered regions span residues 71 to 90 (KLRS…PAVH), 97 to 151 (AVKM…HNWD), 243 to 263 (EPPI…SSGR), and 291 to 313 (LASG…MTER). A compositionally biased stretch (polar residues) spans 76 to 85 (GKQTQPSKHS). A compositionally biased stretch (basic residues) spans 107-122 (TRRRHRRGSSSRRARR). Residues 263-289 (RVTYDARDVRRRLRELTREVEALSHCY) adopt a coiled-coil conformation. A compositionally biased stretch (basic and acidic residues) spans 300-313 (GTRKDWVYRSMTER).

The protein localises to the membrane. Its subcellular location is the cytoplasm. Required for proper cytoplasm removal during spermatogenesis. This chain is Spermatid maturation protein 1 (SPEM1), found in Bos taurus (Bovine).